A 293-amino-acid chain; its full sequence is Small ribosomal subunit protein uS2 (293 aa).

Residues 265–293 (DGGDWAASSAPAPGGENWAEAQPAEGAKW) form a disordered region.

Belongs to the universal ribosomal protein uS2 family. In terms of assembly, component of the small ribosomal subunit. Mature ribosomes consist of a small (40S) and a large (60S) subunit. The 40S subunit contains about 33 different proteins and 1 molecule of RNA (18S). The 60S subunit contains about 49 different proteins and 3 molecules of RNA (25S, 5.8S and 5S). Interacts with rps21.

Its subcellular location is the cytoplasm. Its function is as follows. Required for the assembly and/or stability of the 40S ribosomal subunit. Required for the processing of the 20S rRNA-precursor to mature 18S rRNA in a late step of the maturation of 40S ribosomal subunits. The sequence is that of Small ribosomal subunit protein uS2 (rps0) from Emericella nidulans (strain FGSC A4 / ATCC 38163 / CBS 112.46 / NRRL 194 / M139) (Aspergillus nidulans).